A 120-amino-acid polypeptide reads, in one-letter code: UPF0231 protein KPN78578_01240 (120 aa).

It belongs to the UPF0231 family.

This Klebsiella pneumoniae subsp. pneumoniae (strain ATCC 700721 / MGH 78578) protein is UPF0231 protein KPN78578_01240.